The sequence spans 347 residues: UDP-N-acetylenolpyruvoylglucosamine reductase (347 aa).

The FAD-binding PCMH-type domain occupies 33–221 (AGGSAERIYL…SGAWFALPRD (189 aa)). The active site involves arginine 180. Serine 250 (proton donor) is an active-site residue. Glutamate 320 is an active-site residue.

Belongs to the MurB family. The cofactor is FAD.

The protein localises to the cytoplasm. The catalysed reaction is UDP-N-acetyl-alpha-D-muramate + NADP(+) = UDP-N-acetyl-3-O-(1-carboxyvinyl)-alpha-D-glucosamine + NADPH + H(+). It functions in the pathway cell wall biogenesis; peptidoglycan biosynthesis. Functionally, cell wall formation. This chain is UDP-N-acetylenolpyruvoylglucosamine reductase, found in Nitrosospira multiformis (strain ATCC 25196 / NCIMB 11849 / C 71).